A 263-amino-acid chain; its full sequence is Hydroxyacylglutathione hydrolase (263 aa).

Positions 56, 58, 60, 61, 115, 135, and 175 each coordinate Zn(2+).

This sequence belongs to the metallo-beta-lactamase superfamily. Glyoxalase II family. In terms of assembly, monomer. Zn(2+) serves as cofactor.

It carries out the reaction an S-(2-hydroxyacyl)glutathione + H2O = a 2-hydroxy carboxylate + glutathione + H(+). Its pathway is secondary metabolite metabolism; methylglyoxal degradation; (R)-lactate from methylglyoxal: step 2/2. Functionally, thiolesterase that catalyzes the hydrolysis of S-D-lactoyl-glutathione to form glutathione and D-lactic acid. The polypeptide is Hydroxyacylglutathione hydrolase (Nitrosococcus oceani (strain ATCC 19707 / BCRC 17464 / JCM 30415 / NCIMB 11848 / C-107)).